Here is a 300-residue protein sequence, read N- to C-terminus: 4-hydroxy-tetrahydrodipicolinate synthase (300 aa).

T55 provides a ligand contact to pyruvate. Y143 functions as the Proton donor/acceptor in the catalytic mechanism. Residue K171 is the Schiff-base intermediate with substrate of the active site. I211 serves as a coordination point for pyruvate.

It belongs to the DapA family. As to quaternary structure, homotetramer; dimer of dimers.

It localises to the cytoplasm. It catalyses the reaction L-aspartate 4-semialdehyde + pyruvate = (2S,4S)-4-hydroxy-2,3,4,5-tetrahydrodipicolinate + H2O + H(+). Its pathway is amino-acid biosynthesis; L-lysine biosynthesis via DAP pathway; (S)-tetrahydrodipicolinate from L-aspartate: step 3/4. Its function is as follows. Catalyzes the condensation of (S)-aspartate-beta-semialdehyde [(S)-ASA] and pyruvate to 4-hydroxy-tetrahydrodipicolinate (HTPA). This chain is 4-hydroxy-tetrahydrodipicolinate synthase, found in Mycolicibacterium paratuberculosis (strain ATCC BAA-968 / K-10) (Mycobacterium paratuberculosis).